The chain runs to 803 residues: Phenylalanine--tRNA ligase beta subunit (803 aa).

Positions 40–153 (ASLDRRIVVG…SSWEIGKPFA (114 aa)) constitute a tRNA-binding domain. The B5 domain occupies 400-476 (ADLQLLALRP…RLYGYNAIES (77 aa)). Positions 454, 460, 463, and 464 each coordinate Mg(2+). In terms of domain architecture, FDX-ACB spans 709-801 (SRFPVVERDI…AESKLGAVIR (93 aa)).

This sequence belongs to the phenylalanyl-tRNA synthetase beta subunit family. Type 1 subfamily. In terms of assembly, tetramer of two alpha and two beta subunits. The cofactor is Mg(2+).

Its subcellular location is the cytoplasm. The catalysed reaction is tRNA(Phe) + L-phenylalanine + ATP = L-phenylalanyl-tRNA(Phe) + AMP + diphosphate + H(+). In Chlorobium chlorochromatii (strain CaD3), this protein is Phenylalanine--tRNA ligase beta subunit.